Consider the following 926-residue polypeptide: Protein Niban 1 (926 aa).

Glycine 2 carries the N-myristoyl glycine lipid modification. 5 positions are modified to phosphoserine: serine 578, serine 581, serine 595, serine 601, and serine 640. Disordered regions lie at residues 604–699 (LPGA…VPGS) and 719–889 (VEND…EQVN). Over residues 661-672 (VENTAGPLSSHL) the composition is skewed to polar residues. Serine 699 is subject to Phosphoserine. Residues 733–745 (NIKEEESKIHPEA) are compositionally biased toward basic and acidic residues. Residue serine 755 is modified to Phosphoserine. Residues 756–767 (CEEREVREKEAQ) show a composition bias toward basic and acidic residues. Residues 784–797 (GRGSTSQSTSGGLT) show a composition bias toward low complexity. Residues 840-854 (VTVTPQEDATLSSNP) show a composition bias toward polar residues. Serine 923 is subject to Phosphoserine.

This sequence belongs to the Niban family.

It is found in the cytoplasm. It localises to the membrane. Its function is as follows. Regulates phosphorylation of a number of proteins involved in translation regulation including EIF2A, EIF4EBP1 and RPS6KB1. May be involved in the endoplasmic reticulum stress response. This is Protein Niban 1 from Mus musculus (Mouse).